The sequence spans 128 residues: Fluoride-specific ion channel FluC (128 aa).

Transmembrane regions (helical) follow at residues 4–24, 39–59, 71–91, and 99–119; these read LLLA…RYLI, GTLI…EFSM, FLTT…YETI, and ITLG…FVVI. Na(+) contacts are provided by Gly-78 and Thr-81.

Belongs to the fluoride channel Fluc/FEX (TC 1.A.43) family.

It is found in the cell membrane. It carries out the reaction fluoride(in) = fluoride(out). Its activity is regulated as follows. Na(+) is not transported, but it plays an essential structural role and its presence is essential for fluoride channel function. Functionally, fluoride-specific ion channel. Important for reducing fluoride concentration in the cell, thus reducing its toxicity. The polypeptide is Fluoride-specific ion channel FluC (Clostridium perfringens (strain ATCC 13124 / DSM 756 / JCM 1290 / NCIMB 6125 / NCTC 8237 / Type A)).